The primary structure comprises 363 residues: Wortmanamides biosynthesis cluster protein C (363 aa).

Helical transmembrane passes span 15–35 (FVTL…RFVA), 48–68 (WLAV…LMAI), 95–115 (IAGL…ILAF), 129–149 (ICIY…CIFQ), 175–195 (ILGG…LAMI), 210–230 (VTVL…KIAV), and 237–257 (LYAF…ALLC). The tract at residues 293-312 (SSSKNSRKHGPYDSDQSPGP) is disordered. N321 carries an N-linked (GlcNAc...) asparagine glycan. Residues 344–363 (SPITHPQAYSKQTTRQFDVV) form a disordered region.

The protein belongs to the SAT4 family.

It is found in the membrane. It functions in the pathway secondary metabolite biosynthesis. Its function is as follows. Part of the gene cluster that mediates the biosynthesis of wortmanamides A and B, reduced long-chain polyketides amidated with a specific omega-amino acid, 5-aminopentanoic acid (5PA). The PKS modules of TwmB are involved in the synthesis of the polyketide backbone, whereas the non-canonical C domain of TwmB is a bonafide condensation domain that specifically selects 5PA and catalyzes amidation to release polyketide chain. The C domain clearly prefers C16 and C18 fatty acyl substrates, which is consistent with simultaneous formation of both octaketide and nonaketide acyl amides wortmanamides A and B. Because TwmB lacks a designated enoylreductase (ER) domain, the required activity is provided the enoyl reductase TwmE. The roles of the remaining enzymes have still to be clarified. This chain is Wortmanamides biosynthesis cluster protein C, found in Talaromyces wortmannii (Penicillium wortmannii).